The chain runs to 68 residues: Conotoxin Cal14.13a (68 aa).

Residues 1-21 (MKLCVVIVLLMLAMPFNGGEA) form the signal peptide. Residues 22–38 (SRFFNQHARSQRSGMKT) constitute a propeptide that is removed on maturation. A Valine amide modification is found at Val66.

Contains 2 disulfide bonds. As to expression, expressed by the venom duct.

It is found in the secreted. Functionally, probable neurotoxin with unknown target. Possibly targets ion channels. This is Conotoxin Cal14.13a from Californiconus californicus (California cone).